The following is a 2269-amino-acid chain: Neuron navigator 3 (2269 aa).

One can recognise a Calponin-homology (CH) domain in the interval serine 55–glutamine 162. Residues threonine 186 to tyrosine 207 are compositionally biased toward polar residues. Disordered regions lie at residues threonine 186–leucine 358 and serine 388–serine 532. Low complexity predominate over residues glycine 236 to serine 252. Composition is skewed to polar residues over residues alanine 267–alanine 291 and serine 305–leucine 319. The segment covering proline 323 to proline 333 has biased composition (pro residues). A compositionally biased stretch (polar residues) spans alanine 346 to serine 356. Positions proline 411 to serine 432 are enriched in low complexity. A compositionally biased stretch (polar residues) spans threonine 505–proline 518. The stretch at glutamate 644–glutamine 672 forms a coiled coil. Disordered stretches follow at residues glycine 692–valine 737, alanine 756–glutamate 776, valine 836–proline 1036, serine 1050–aspartate 1079, valine 1097–cysteine 1412, and glycine 1461–valine 1487. Composition is skewed to polar residues over residues serine 699 to arginine 716 and proline 727 to valine 737. Residues aspartate 847 to aspartate 860 are compositionally biased toward low complexity. Positions glycine 874 to asparagine 886 are enriched in polar residues. The segment covering proline 919–cysteine 932 has biased composition (low complexity). Over residues glutamine 939–serine 950 the composition is skewed to polar residues. Over residues glycine 977–lysine 989 the composition is skewed to basic and acidic residues. Residues serine 1110–lysine 1137 show a composition bias toward low complexity. A compositionally biased stretch (polar residues) spans glycine 1163–glutamine 1172. 2 stretches are compositionally biased toward low complexity: residues glycine 1185–glycine 1202 and glycine 1223–glycine 1234. Positions glycine 1266 to glycine 1276 are enriched in gly residues. The span at serine 1292–serine 1305 shows a compositional bias: low complexity. Composition is skewed to polar residues over residues asparagine 1313 to serine 1339 and arginine 1354 to serine 1363. The segment covering threonine 1381–arginine 1391 has biased composition (basic and acidic residues). Residues serine 1392–cysteine 1412 are compositionally biased toward polar residues. Positions serine 1499 to alanine 1586 form a coiled coil. Disordered stretches follow at residues glutamine 1602 to proline 1672, asparagine 1756 to serine 1792, and glycine 2207 to leucine 2269. 2 stretches are compositionally biased toward low complexity: residues serine 1605 to alanine 1623 and threonine 1765 to serine 1792. Positions cysteine 1697–threonine 1765 form a coiled coil. The span at tyrosine 2208 to aspartate 2224 shows a compositional bias: polar residues.

It belongs to the Nav/unc-53 family. In terms of assembly, interacts with F-actin.

Its subcellular location is the nucleus outer membrane. It localises to the golgi apparatus. The protein localises to the cell projection. It is found in the lamellipodium. The protein resides in the filopodium. Involved in liver and heart organogenesis during embryo development. Plays a role in the migration of hepatoblasts from the intestinal endoderm during liver organogenesis; possibly by modulating actin polymerization during hepatoblast outgrowth. May be involved in neuron regeneration. The sequence is that of Neuron navigator 3 (nav3) from Danio rerio (Zebrafish).